Here is a 156-residue protein sequence, read N- to C-terminus: ATP synthase subunit b (156 aa).

The helical transmembrane segment at 7–27 (LFVQAIVFLILVWFTMQFVWP) threads the bilayer.

Belongs to the ATPase B chain family. As to quaternary structure, F-type ATPases have 2 components, F(1) - the catalytic core - and F(0) - the membrane proton channel. F(1) has five subunits: alpha(3), beta(3), gamma(1), delta(1), epsilon(1). F(0) has three main subunits: a(1), b(2) and c(10-14). The alpha and beta chains form an alternating ring which encloses part of the gamma chain. F(1) is attached to F(0) by a central stalk formed by the gamma and epsilon chains, while a peripheral stalk is formed by the delta and b chains.

Its subcellular location is the cell inner membrane. In terms of biological role, f(1)F(0) ATP synthase produces ATP from ADP in the presence of a proton or sodium gradient. F-type ATPases consist of two structural domains, F(1) containing the extramembraneous catalytic core and F(0) containing the membrane proton channel, linked together by a central stalk and a peripheral stalk. During catalysis, ATP synthesis in the catalytic domain of F(1) is coupled via a rotary mechanism of the central stalk subunits to proton translocation. Component of the F(0) channel, it forms part of the peripheral stalk, linking F(1) to F(0). The sequence is that of ATP synthase subunit b from Verminephrobacter eiseniae (strain EF01-2).